Consider the following 146-residue polypeptide: Protein SprT-like (146 aa).

Residues 4 to 142 enclose the SprT-like domain; sequence NEYVKQVSLE…GRCKGKLRLL (139 aa). His64 contributes to the Zn(2+) binding site. Glu65 is a catalytic residue. His68 contributes to the Zn(2+) binding site.

This sequence belongs to the SprT family. It depends on Zn(2+) as a cofactor.

It is found in the cytoplasm. This Streptococcus gordonii (strain Challis / ATCC 35105 / BCRC 15272 / CH1 / DL1 / V288) protein is Protein SprT-like.